The chain runs to 141 residues: Large ribosomal subunit protein uL11 (141 aa).

The protein belongs to the universal ribosomal protein uL11 family. As to quaternary structure, part of the ribosomal stalk of the 50S ribosomal subunit. Interacts with L10 and the large rRNA to form the base of the stalk. L10 forms an elongated spine to which L12 dimers bind in a sequential fashion forming a multimeric L10(L12)X complex. One or more lysine residues are methylated.

Its function is as follows. Forms part of the ribosomal stalk which helps the ribosome interact with GTP-bound translation factors. The protein is Large ribosomal subunit protein uL11 of Desulfotalea psychrophila (strain LSv54 / DSM 12343).